Reading from the N-terminus, the 203-residue chain is Secreted phosphoprotein 24 (203 aa).

A signal peptide spans 1–23 (MELATMKTLVMLVLGMHYWCASG). 2 disulfides stabilise this stretch: cysteine 86–cysteine 96 and cysteine 109–cysteine 127. Serine 90 bears the Phosphoserine mark. Residues serine 137, serine 138, and serine 174 each carry the phosphoserine modification.

It belongs to the SPP2 family. In terms of processing, multiply phosphorylated at serine residues. Phosphorylation sites are present in the extracellular medium.

It localises to the secreted. Functionally, could coordinate an aspect of bone turnover. The sequence is that of Secreted phosphoprotein 24 (Spp2) from Rattus norvegicus (Rat).